The following is a 645-amino-acid chain: MCKKPYYITTPIYYPSTNLHIGNTYTTVAADAIARFKRLTGHEVMFLTGTDEHGQKIERIANEKGITPKEHVDEIVAGIKDLWKMMNISYDKFIRTTDDYHVKAVQEIFKKLYDQGDIYKDSYEGLYCTPCESFWTETQLVNGNCPDCGRPVEKAKEEAYFFKMSKYADRLIQYIEEHPDFIQPESRKNEMLNNFLRPGLQDLCVSRTSFTWGIPVSFDEKHVIYVWIDALSNYITALGYGQENQELYKKFWPADVHLIGKDILRFHTIYWPIMLMALGLELPKQVFGHGWLLVDGGKMSKSKGNVVDPVVLVNMFGADAVRYYLLREIPFGSDGLFNNEIFIKKVNTDLANDLGNLLSRTIAMVYKYFGGVIQAPTCKEPIDDELINLALSTPGKVEASIDALKIPEALESIWTLISRANKYIDETTPWILAKDEEKKERLGTVLYNLLETLRFVSVMISPFLTETSVKINAQLNTKVTTWESLKEFNGTVAGDKVVKGDVIFPRIDVEEKLAELEALKPAPVKPANEELVENPIKEEITIDDFDKIDLRVVKVLECEPVKKAKKLLKLKVDLGGEERQVISGIAQYYKPEELVGKYVVLVANLKPVKLRGELSQGMILAAAPSDDSELLLVNPGEMLTGSQVR.

Residues Tyr-13–Asn-23 carry the 'HIGH' region motif. The Zn(2+) site is built by Cys-128, Cys-131, Cys-145, and Cys-148. Residues Lys-298–Ser-302 carry the 'KMSKS' region motif. Lys-301 is an ATP binding site. The 102-residue stretch at Asp-544–Arg-645 folds into the tRNA-binding domain.

It belongs to the class-I aminoacyl-tRNA synthetase family. MetG type 2A subfamily. Homodimer. Zn(2+) serves as cofactor.

The protein resides in the cytoplasm. The catalysed reaction is tRNA(Met) + L-methionine + ATP = L-methionyl-tRNA(Met) + AMP + diphosphate. Its function is as follows. Is required not only for elongation of protein synthesis but also for the initiation of all mRNA translation through initiator tRNA(fMet) aminoacylation. The chain is Methionine--tRNA ligase (metG) from Clostridium perfringens (strain 13 / Type A).